The sequence spans 155 residues: Ribosome maturation factor RimP (155 aa).

This sequence belongs to the RimP family.

The protein localises to the cytoplasm. Its function is as follows. Required for maturation of 30S ribosomal subunits. The chain is Ribosome maturation factor RimP from Staphylococcus aureus (strain bovine RF122 / ET3-1).